The chain runs to 204 residues: Holliday junction branch migration complex subunit RuvA (204 aa).

The segment at 1–64 is domain I; the sequence is MIGRLRGVVI…EDAQLLYGFN (64 aa). Residues 65–143 are domain II; sequence HKQERALFRE…GWVSHDLFSP (79 aa). A flexible linker region spans residues 144-155; the sequence is AEISLPARESVL. A domain III region spans residues 156 to 204; that stretch reads RAPDSSEEAASALVALGYKPQQASQIVSKIAKEGMSVEDIIRESLRSLV.

The protein belongs to the RuvA family. As to quaternary structure, homotetramer. Forms an RuvA(8)-RuvB(12)-Holliday junction (HJ) complex. HJ DNA is sandwiched between 2 RuvA tetramers; dsDNA enters through RuvA and exits via RuvB. An RuvB hexamer assembles on each DNA strand where it exits the tetramer. Each RuvB hexamer is contacted by two RuvA subunits (via domain III) on 2 adjacent RuvB subunits; this complex drives branch migration. In the full resolvosome a probable DNA-RuvA(4)-RuvB(12)-RuvC(2) complex forms which resolves the HJ.

It is found in the cytoplasm. The RuvA-RuvB-RuvC complex processes Holliday junction (HJ) DNA during genetic recombination and DNA repair, while the RuvA-RuvB complex plays an important role in the rescue of blocked DNA replication forks via replication fork reversal (RFR). RuvA specifically binds to HJ cruciform DNA, conferring on it an open structure. The RuvB hexamer acts as an ATP-dependent pump, pulling dsDNA into and through the RuvAB complex. HJ branch migration allows RuvC to scan DNA until it finds its consensus sequence, where it cleaves and resolves the cruciform DNA. The sequence is that of Holliday junction branch migration complex subunit RuvA from Aeromonas salmonicida (strain A449).